The sequence spans 64 residues: Cytochrome c oxidase subunit 9, mitochondrial (64 aa).

At 1–15 the chain is on the mitochondrial matrix side; it reads MAATAVRPITGMLRR. Residues 16 to 36 traverse the membrane as a helical segment; sequence GLILDIGIALGVGFVMANGYW. The Mitochondrial intermembrane portion of the chain corresponds to 37–64; that stretch reads YGYHMPRTNARDNYYKKLEEERAARMGA.

The protein belongs to the fungal cytochrome c oxidase subunit 7a family. In terms of assembly, component of the cytochrome c oxidase (complex IV, CIV), a multisubunit enzyme composed of 11 subunits. The complex is composed of a catalytic core of 3 subunits Cox1, Cox2 and Cox3, encoded in the mitochondrial DNA, and 8 supernumerary subunits Cox4, Cox5a/Cox5, Cox6, Cox7, Cox8, Cox7a/Cox9, Cox6b/Cox12 and Cox6a/Cox13, which are encoded in the nuclear genome. The complex exists as a monomer or a dimer and forms respiratory supercomplexes (SCs) in the inner mitochondrial membrane with NADH-ubiquinone oxidoreductase (complex I, CI) and ubiquinol-cytochrome c oxidoreductase (cytochrome b-c1 complex, complex III, CIII), resulting in various different assemblies (supercomplexes I(1)IV(1), I(1)III(3)IV(2), III(2)IV(1) and III(2)IV(2) as well as larger supercomplexes of compositions like I(1)III(2)IV(5-6)).

It is found in the mitochondrion inner membrane. The protein operates within energy metabolism; oxidative phosphorylation. Component of the cytochrome c oxidase, the last enzyme in the mitochondrial electron transport chain which drives oxidative phosphorylation. The respiratory chain contains 3 multisubunit complexes succinate dehydrogenase (complex II, CII), ubiquinol-cytochrome c oxidoreductase (cytochrome b-c1 complex, complex III, CIII) and cytochrome c oxidase (complex IV, CIV), that cooperate to transfer electrons derived from NADH and succinate to molecular oxygen, creating an electrochemical gradient over the inner membrane that drives transmembrane transport and the ATP synthase. Cytochrome c oxidase is the component of the respiratory chain that catalyzes the reduction of oxygen to water. Electrons originating from reduced cytochrome c in the intermembrane space (IMS) are transferred via the dinuclear copper A center (CU(A)) of Cox2 and heme A of Cox1 to the active site in Cox1, a binuclear center (BNC) formed by heme A3 and copper B (CU(B)). The BNC reduces molecular oxygen to 2 water molecules using 4 electrons from cytochrome c in the IMS and 4 protons from the mitochondrial matrix. The sequence is that of Cytochrome c oxidase subunit 9, mitochondrial (cox-17) from Neurospora crassa (strain ATCC 24698 / 74-OR23-1A / CBS 708.71 / DSM 1257 / FGSC 987).